The sequence spans 1912 residues: Chromodomain-helicase-DNA-binding protein 4 (1912 aa).

The segment at methionine 1 to aspartate 157 is disordered. The segment covering asparagine 35 to glutamate 45 has biased composition (acidic residues). Serine 44 bears the Phosphoserine mark. Positions glycine 113–lysine 131 are enriched in basic residues. Lysine 133 participates in a covalent cross-link: Glycyl lysine isopeptide (Lys-Gly) (interchain with G-Cter in SUMO2). Residues glutamate 135–serine 145 are compositionally biased toward acidic residues. Residues lysine 146, lysine 179, and lysine 297 each participate in a glycyl lysine isopeptide (Lys-Gly) (interchain with G-Cter in SUMO2) cross-link. The segment at alanine 243–threonine 360 is disordered. The KIKL motif lies at lysine 295 to leucine 298. Serine 303 bears the Phosphoserine mark. A Glycyl lysine isopeptide (Lys-Gly) (interchain with G-Cter in SUMO2) cross-link involves residue lysine 304. Phosphoserine occurs at positions 308, 309, 310, and 319. Residues glutamate 311–aspartate 323 show a composition bias toward acidic residues. Positions serine 340 to lysine 353 are enriched in basic residues. Phosphothreonine is present on threonine 367. A PHD-type 1 zinc finger spans residues glutamine 370–glutamate 417. Serine 428 is subject to Phosphoserine. A PHD-type 2 zinc finger spans residues methionine 449–proline 496. The region spanning threonine 494–lysine 594 is the Chromo 1 domain. Disordered stretches follow at residues tryptophan 510–glycine 537 and asparagine 578–proline 603. Over residues proline 513–proline 522 the composition is skewed to pro residues. Serine 515 carries the phosphoserine modification. A phosphothreonine mark is found at threonine 517 and threonine 529. A Phosphoserine modification is found at serine 531. Glycyl lysine isopeptide (Lys-Gly) (interchain with G-Cter in SUMO2) cross-links involve residues lysine 618 and lysine 696. One can recognise a Chromo 2 domain in the interval methionine 622 to leucine 697. Threonine 703 is modified (phosphothreonine). Lysine 711 is covalently cross-linked (Glycyl lysine isopeptide (Lys-Gly) (interchain with G-Cter in SUMO1); alternate). Residue lysine 711 forms a Glycyl lysine isopeptide (Lys-Gly) (interchain with G-Cter in SUMO2); alternate linkage. The 185-residue stretch at arginine 738–glutamate 922 folds into the Helicase ATP-binding domain. Aspartate 751 to threonine 758 contributes to the ATP binding site. Residues aspartate 873–histidine 876 carry the DEAH box motif. Positions leucine 1054–leucine 1203 constitute a Helicase C-terminal domain. At serine 1209 the chain carries Phosphoserine. Glycyl lysine isopeptide (Lys-Gly) (interchain with G-Cter in SUMO2) cross-links involve residues lysine 1212, lysine 1228, lysine 1239, and lysine 1304. Phosphoserine is present on residues serine 1308, serine 1349, and serine 1370. Disordered stretches follow at residues asparagine 1344–proline 1401 and glutamate 1525–aspartate 1562. Glycyl lysine isopeptide (Lys-Gly) (interchain with G-Cter in SUMO2) cross-links involve residues lysine 1528 and lysine 1529. Serine 1531, serine 1535, and serine 1537 each carry phosphoserine. The segment covering serine 1535–serine 1544 has biased composition (pro residues). Phosphothreonine is present on residues threonine 1542, threonine 1549, and threonine 1553. Lysine 1565 participates in a covalent cross-link: Glycyl lysine isopeptide (Lys-Gly) (interchain with G-Cter in SUMO2). Serine 1570 carries the phosphoserine modification. Positions serine 1570 to lysine 1584 are enriched in basic and acidic residues. Disordered regions lie at residues serine 1570–glutamate 1589 and cysteine 1594–valine 1644. A Glycyl lysine isopeptide (Lys-Gly) (interchain with G-Cter in SUMO2) cross-link involves residue lysine 1572. A Phosphoserine modification is found at serine 1576. The required for interaction with PCNT stretch occupies residues isoleucine 1577–glutamine 1912. Lysine 1584 participates in a covalent cross-link: Glycyl lysine isopeptide (Lys-Gly) (interchain with G-Cter in SUMO2). Serine 1602 is modified (phosphoserine). Residues glutamate 1603 to valine 1644 are compositionally biased toward basic and acidic residues. Residues lysine 1606, lysine 1617, and lysine 1636 each participate in a glycyl lysine isopeptide (Lys-Gly) (interchain with G-Cter in SUMO2) cross-link. Lysine 1643 participates in a covalent cross-link: Glycyl lysine isopeptide (Lys-Gly) (interchain with G-Cter in SUMO2); alternate. Lysine 1643 is subject to N6-acetyllysine; alternate. Residue lysine 1647 forms a Glycyl lysine isopeptide (Lys-Gly) (interchain with G-Cter in SUMO2) linkage. A Phosphothreonine modification is found at threonine 1653. Residues lysine 1660 and lysine 1670 each participate in a glycyl lysine isopeptide (Lys-Gly) (interchain with G-Cter in SUMO2) cross-link. Position 1679 is a phosphothreonine (threonine 1679). Glycyl lysine isopeptide (Lys-Gly) (interchain with G-Cter in SUMO2) cross-links involve residues lysine 1687 and lysine 1865.

Belongs to the SNF2/RAD54 helicase family. In terms of assembly, component of the nucleosome remodeling and deacetylase (NuRD) repressor complex, composed of core proteins MTA1, MTA2, MTA3, RBBP4, RBBP7, HDAC1, HDAC2, MBD2, MBD3, and peripherally associated proteins CDK2AP1, CDK2AP2, GATAD2A, GATAD2B, CHD3, CHD4 and CHD5. The exact stoichiometry of the NuRD complex is unknown, and some subunits such as MBD2 and MBD3, GATAD2A and GATAD2B, and CHD3, CHD4 and CHD5 define mutually exclusive NuRD complexes. Interacts with IKFZ1; the interaction is direct and when in part of the NuRD complex. Part of a complex containing ATR and HDAC2. Interacts with HDAC2; the interaction is direct. Interacts with the cohesin complex component RAD21; the interaction is direct. Interacts with the ISWI chromatin remodeling complex component SMARCA5; the interaction is direct. Interacts with ZGPAT; the interaction is direct. Interacts with ZMYND8; the interaction is direct, appears to occur with monomeric ZMYND8, and is increased following DNA damage. Interacts with BCL6. Interacts with BRD4. Interacts with CBX1. Interacts with CBX3. Interacts with CBX5. Interacts with GATAD2A. Interacts with HDAC1. Interacts with KLF1; the interaction depends on sumoylation of KLF1, and leads to its transcriptional repression. Interacts with MTA1. Interacts with PCNT. Interacts with RBBP7. Interacts with SETX. Interacts with TRIM27. Interacts with histone H3. Interacts with histone H4. Does not interact with PWWP2A. Does not interact with PWWP2B. Interacts (via KIKL motif) with BRD3 (via NET domain). It depends on Zn(2+) as a cofactor. Widely expressed.

It is found in the nucleus. The protein localises to the cytoplasm. Its subcellular location is the cytoskeleton. The protein resides in the microtubule organizing center. It localises to the centrosome. It carries out the reaction ATP + H2O = ADP + phosphate + H(+). Functionally, ATP-dependent chromatin-remodeling factor that binds and distorts nucleosomal DNA. Acts as a component of the histone deacetylase NuRD complex which participates in the remodeling of chromatin. Localizes to acetylated damaged chromatin in a ZMYND8-dependent manner, to promote transcriptional repression and double-strand break repair by homologous recombination. Involved in neurogenesis. This chain is Chromodomain-helicase-DNA-binding protein 4 (CHD4), found in Homo sapiens (Human).